Consider the following 89-residue polypeptide: Luqin-like RYamide peptides lury-1 (89 aa).

A signal peptide spans 1–19 (MLTRVPVLILAVIVMLALC). Residues 20–26 (QEPEKPE) constitute a propeptide that is removed on maturation. Tyr35 and Tyr43 each carry tyrosine amide. The propeptide occupies 47-89 (SGNLMESSQNSLTEESSDVVCQLIDGKYICLPVDAVRFRPFFL).

As to expression, expressed in the M1 and M2 pharyngeal neurons from where the LURY-1-1 and LURY-1-2 peptides are secreted.

The protein localises to the secreted. Acts as a ligand for the npr-22 receptor and controls food-related processes including feeding, lifespan, egg-laying and roaming behavior. Secreted in the presence of food, leading to reduced feeding and roaming behavior and increased egg laying and lifespan. Activity may be latent under normal conditions but induced under conditions that cause hyperactivation of the pharynx such as abrupt refeeding after starvation. The chain is Luqin-like RYamide peptides lury-1 from Caenorhabditis elegans.